We begin with the raw amino-acid sequence, 776 residues long: Conserved oligomeric Golgi complex subunit 4 (776 aa).

Ser-342 and Ser-345 each carry phosphoserine.

This sequence belongs to the COG4 family. In terms of assembly, component of the conserved oligomeric Golgi complex which is composed of eight different subunits and is required for normal Golgi morphology and localization.

Its subcellular location is the golgi apparatus membrane. Its function is as follows. Required for normal Golgi function. The polypeptide is Conserved oligomeric Golgi complex subunit 4 (Drosophila melanogaster (Fruit fly)).